We begin with the raw amino-acid sequence, 163 residues long: Nucleotide-binding protein KPK_4305 (163 aa).

Belongs to the YajQ family.

Its function is as follows. Nucleotide-binding protein. This Klebsiella pneumoniae (strain 342) protein is Nucleotide-binding protein KPK_4305.